The following is a 233-amino-acid chain: Ribonuclease 3 (233 aa).

The RNase III domain maps to 4-126 (LNKLMERLGH…IVGAIYIDAG (123 aa)). Residue glutamate 39 coordinates Mg(2+). Aspartate 43 is a catalytic residue. Mg(2+) contacts are provided by aspartate 112 and glutamate 115. Residue glutamate 115 is part of the active site. The 70-residue stretch at 153–222 (DAKSLLQEWL…AKRFLELLDD (70 aa)) folds into the DRBM domain.

This sequence belongs to the ribonuclease III family. Homodimer. It depends on Mg(2+) as a cofactor.

The protein resides in the cytoplasm. It catalyses the reaction Endonucleolytic cleavage to 5'-phosphomonoester.. Its function is as follows. Digests double-stranded RNA. Involved in the processing of primary rRNA transcript to yield the immediate precursors to the large and small rRNAs (23S and 16S). Processes some mRNAs, and tRNAs when they are encoded in the rRNA operon. Processes pre-crRNA and tracrRNA of type II CRISPR loci if present in the organism. This chain is Ribonuclease 3, found in Coxiella burnetii (strain Dugway 5J108-111).